The chain runs to 343 residues: Small ribosomal subunit biogenesis GTPase RsgA (343 aa).

Residues 116-275 (RGQLKPVAAN…LIDSPGIREF (160 aa)) form the CP-type G domain. GTP contacts are provided by residues 163 to 166 (NKAD) and 217 to 225 (GQSGVGKSS). The Zn(2+) site is built by cysteine 299, cysteine 304, histidine 306, and cysteine 312.

The protein belongs to the TRAFAC class YlqF/YawG GTPase family. RsgA subfamily. Monomer. Associates with 30S ribosomal subunit, binds 16S rRNA. Zn(2+) serves as cofactor.

The protein localises to the cytoplasm. One of several proteins that assist in the late maturation steps of the functional core of the 30S ribosomal subunit. Helps release RbfA from mature subunits. May play a role in the assembly of ribosomal proteins into the subunit. Circularly permuted GTPase that catalyzes slow GTP hydrolysis, GTPase activity is stimulated by the 30S ribosomal subunit. This chain is Small ribosomal subunit biogenesis GTPase RsgA, found in Ectopseudomonas mendocina (strain ymp) (Pseudomonas mendocina).